We begin with the raw amino-acid sequence, 102 residues long: Co-chaperonin GroES (102 aa).

This sequence belongs to the GroES chaperonin family. As to quaternary structure, heptamer of 7 subunits arranged in a ring. Interacts with the chaperonin GroEL.

The protein resides in the cytoplasm. Together with the chaperonin GroEL, plays an essential role in assisting protein folding. The GroEL-GroES system forms a nano-cage that allows encapsulation of the non-native substrate proteins and provides a physical environment optimized to promote and accelerate protein folding. GroES binds to the apical surface of the GroEL ring, thereby capping the opening of the GroEL channel. The polypeptide is Co-chaperonin GroES (Chlamydia trachomatis serovar L2 (strain ATCC VR-902B / DSM 19102 / 434/Bu)).